Reading from the N-terminus, the 472-residue chain is Argininosuccinate lyase (472 aa).

Belongs to the lyase 1 family. Argininosuccinate lyase subfamily.

The protein localises to the cytoplasm. It catalyses the reaction 2-(N(omega)-L-arginino)succinate = fumarate + L-arginine. It functions in the pathway amino-acid biosynthesis; L-arginine biosynthesis; L-arginine from L-ornithine and carbamoyl phosphate: step 3/3. This chain is Argininosuccinate lyase, found in Maricaulis maris (strain MCS10) (Caulobacter maris).